A 126-amino-acid polypeptide reads, in one-letter code: uncharacterized protein (126 aa).

This is an uncharacterized protein from Archaeoglobus fulgidus (strain ATCC 49558 / DSM 4304 / JCM 9628 / NBRC 100126 / VC-16).